The following is a 355-amino-acid chain: Peptide chain release factor 1 (355 aa).

The residue at position 233 (Q233) is an N5-methylglutamine.

This sequence belongs to the prokaryotic/mitochondrial release factor family. Post-translationally, methylated by PrmC. Methylation increases the termination efficiency of RF1.

It localises to the cytoplasm. In terms of biological role, peptide chain release factor 1 directs the termination of translation in response to the peptide chain termination codons UAG and UAA. The protein is Peptide chain release factor 1 of Syntrophobacter fumaroxidans (strain DSM 10017 / MPOB).